The primary structure comprises 708 residues: Polyribonucleotide nucleotidyltransferase (708 aa).

Positions 490 and 496 each coordinate Mg(2+). One can recognise a KH domain in the interval P557–I619. In terms of domain architecture, S1 motif spans G629 to K699.

It belongs to the polyribonucleotide nucleotidyltransferase family. The cofactor is Mg(2+).

It is found in the cytoplasm. The catalysed reaction is RNA(n+1) + phosphate = RNA(n) + a ribonucleoside 5'-diphosphate. In terms of biological role, involved in mRNA degradation. Catalyzes the phosphorolysis of single-stranded polyribonucleotides processively in the 3'- to 5'-direction. In Bacteroides fragilis (strain ATCC 25285 / DSM 2151 / CCUG 4856 / JCM 11019 / LMG 10263 / NCTC 9343 / Onslow / VPI 2553 / EN-2), this protein is Polyribonucleotide nucleotidyltransferase.